A 108-amino-acid polypeptide reads, in one-letter code: Large ribosomal subunit protein P1 (108 aa).

The interval 67-108 (PAAAPAEAGGEEKKEEEKKEEEEKEEEVSEEEALAGLSALFG) is disordered. Over residues 84 to 99 (KKEEEEKEEEVSEEEA) the composition is skewed to acidic residues.

This sequence belongs to the eukaryotic ribosomal protein P1/P2 family. In terms of assembly, part of the 50S ribosomal subunit. Homodimer, it forms part of the ribosomal stalk which helps the ribosome interact with GTP-bound translation factors. Forms a heptameric uL10/P0(P1)2(P1)2(P1)2 complex, where uL10/P0 forms an elongated spine to which the P1 dimers bind in a sequential fashion.

In terms of biological role, forms part of the ribosomal stalk, playing a central role in the interaction of the ribosome with GTP-bound translation factors. The stalk complex of P.horikoshii binds to E.coli large subunits and confers on them the ability to interact with eukaryotic elongation factors. Each succesive P1 dimer bound along the P0 spine increases the GTPase activity of elongation factors and increases translation by reconsituted ribosomes. The sequence is that of Large ribosomal subunit protein P1 from Pyrococcus horikoshii (strain ATCC 700860 / DSM 12428 / JCM 9974 / NBRC 100139 / OT-3).